Reading from the N-terminus, the 386-residue chain is Succinate--CoA ligase [ADP-forming] subunit beta (386 aa).

The ATP-grasp domain maps to Lys-9–Glu-243. ATP is bound by residues Lys-45, Gly-52–Gly-54, Glu-98, Val-101, and Glu-106. Residues Asn-198 and Asp-212 each contribute to the Mg(2+) site. Substrate-binding positions include Asn-263 and Gly-320 to Leu-322.

The protein belongs to the succinate/malate CoA ligase beta subunit family. Heterotetramer of two alpha and two beta subunits. Mg(2+) is required as a cofactor.

It catalyses the reaction succinate + ATP + CoA = succinyl-CoA + ADP + phosphate. The enzyme catalyses GTP + succinate + CoA = succinyl-CoA + GDP + phosphate. It participates in carbohydrate metabolism; tricarboxylic acid cycle; succinate from succinyl-CoA (ligase route): step 1/1. Functionally, succinyl-CoA synthetase functions in the citric acid cycle (TCA), coupling the hydrolysis of succinyl-CoA to the synthesis of either ATP or GTP and thus represents the only step of substrate-level phosphorylation in the TCA. The beta subunit provides nucleotide specificity of the enzyme and binds the substrate succinate, while the binding sites for coenzyme A and phosphate are found in the alpha subunit. The sequence is that of Succinate--CoA ligase [ADP-forming] subunit beta from Desulfotalea psychrophila (strain LSv54 / DSM 12343).